The sequence spans 163 residues: Late embryogenesis abundant protein Dc3 (163 aa).

Disordered stretches follow at residues 1 to 117 and 139 to 163; these read MASH…GGLM and FGMA…ARTE. 3 stretches are compositionally biased toward basic and acidic residues: residues 28–56, 67–84, and 91–113; these read TMKD…ESKD, GAVK…KEKT, and TKEK…KEKT. 6 repeat units span residues 32 to 42, 43 to 53, 65 to 75, 76 to 86, 87 to 97, and 103 to 115. The segment at 32-115 is 6 X 11 AA approximate repeats; sequence KAQAAKDKAS…AVAGKEKTGG (84 aa). The span at 152–163 shows a compositional bias: low complexity; the sequence is TTRVTRSSARTE.

The protein belongs to the LEA type 4 family.

The chain is Late embryogenesis abundant protein Dc3 from Daucus carota (Wild carrot).